Reading from the N-terminus, the 775-residue chain is MKLLSLLMLAGIAQAIVPPREPRSPTGGGNKLLTYKECVPRATISPRSTSLAWINSEEDGRYISQSDDGALILQNIVTNTNKTLVAADKVPKGYYDYWFKPDLSAVLWATNYTKQYRHSYFANYFILDIKKGSLTPLAQDQAGDIQYAQWSPMNNSIAYVRXNDLYIWNNGKTKRITENGGPDIFNGVPDWVYEEEIFGDRFALWFSPDGEYLAYLRFNETGVPTYTIPYYKNKQKIAPAYPRELEIRYPKVSAKNPTVQFHLLNIASSQETTIPVTAFPENDLVIGEVAWLSSGHDSVAYRAFNRVQDREKIVSVKVESKESKVIRERDGTDGWIDNLLSMSYIGNVNGKEYYVDISDASGWAHIYLYPVDGGKEIALTKGEWEVVAILKVDTKKKLIYFTSTKYHSTTRHVYSVSYDTKVMTPLVNDKEAAYYTASFSAKGGYYILSYQGPNVPYQELYSTKDSKKPLKTITSNDALLEKLKEYKLPKVSFFEIKLPSGETLNVKQRLPPNFNPHKKYPVLFTPYGGPGAQEVSQAWNSLDFKSYITSDPELEYVTWTVDNRGTGYKGRKFRSAVAKRLGFLEAQDQVFAAKEVLKNRWADKDHIGIWGXSYGGFLTAKTLETDSGVFTFGISTAPVSDFRLYDSMYTERYMKTVELNADGYSETAVHKVDGFKNLKGHYLIQHGTGDDNVHFQNAAVLSNTLMNGGVTADKLTTQWFTDSDHGIRYDMDSTYQYKQLSKMVYDQKQRRPESPPMHQWSKRVLAALFGERAEE.

Residues Met-1–Ala-15 form the signal peptide. Asn-81, Asn-111, Asn-154, and Asn-219 each carry an N-linked (GlcNAc...) asparagine glycan. Residues Ser-613, Asp-690, and His-725 each act as charge relay system in the active site.

The protein belongs to the peptidase S9B family.

Its subcellular location is the secreted. It carries out the reaction Release of an N-terminal dipeptide, Xaa-Yaa-|-Zaa-, from a polypeptide, preferentially when Yaa is Pro, provided Zaa is neither Pro nor hydroxyproline.. Its function is as follows. Extracellular dipeptidyl-peptidase which removes N-terminal dipeptides sequentially from polypeptides having unsubstituted N-termini provided that the penultimate residue is proline. Contributes to pathogenicity. This is Dipeptidyl peptidase 4 (DPP4) from Trichophyton rubrum (Athlete's foot fungus).